The following is a 310-amino-acid chain: Probable cell division protein WhiA (310 aa).

The segment at residues 274-308 (SLKELGTLVPGGPISKSGINHRLRKINQFAEQLQK) is a DNA-binding region (H-T-H motif).

Belongs to the WhiA family.

Its function is as follows. Involved in cell division and chromosome segregation. This Lactiplantibacillus plantarum (strain ATCC BAA-793 / NCIMB 8826 / WCFS1) (Lactobacillus plantarum) protein is Probable cell division protein WhiA.